We begin with the raw amino-acid sequence, 245 residues long: tRNA1(Val) (adenine(37)-N6)-methyltransferase (245 aa).

It belongs to the methyltransferase superfamily. tRNA (adenine-N(6)-)-methyltransferase family.

The protein localises to the cytoplasm. The enzyme catalyses adenosine(37) in tRNA1(Val) + S-adenosyl-L-methionine = N(6)-methyladenosine(37) in tRNA1(Val) + S-adenosyl-L-homocysteine + H(+). In terms of biological role, specifically methylates the adenine in position 37 of tRNA(1)(Val) (anticodon cmo5UAC). The sequence is that of tRNA1(Val) (adenine(37)-N6)-methyltransferase from Shigella sonnei (strain Ss046).